Consider the following 473-residue polypeptide: ATP synthase subunit beta (473 aa).

Residue 158–165 coordinates ATP; it reads GGAGVGKT.

The protein belongs to the ATPase alpha/beta chains family. As to quaternary structure, F-type ATPases have 2 components, CF(1) - the catalytic core - and CF(0) - the membrane proton channel. CF(1) has five subunits: alpha(3), beta(3), gamma(1), delta(1), epsilon(1). CF(0) has three main subunits: a(1), b(2) and c(9-12). The alpha and beta chains form an alternating ring which encloses part of the gamma chain. CF(1) is attached to CF(0) by a central stalk formed by the gamma and epsilon chains, while a peripheral stalk is formed by the delta and b chains.

Its subcellular location is the cell membrane. The enzyme catalyses ATP + H2O + 4 H(+)(in) = ADP + phosphate + 5 H(+)(out). In terms of biological role, produces ATP from ADP in the presence of a proton gradient across the membrane. The catalytic sites are hosted primarily by the beta subunits. The chain is ATP synthase subunit beta from Bacillus pumilus (strain SAFR-032).